We begin with the raw amino-acid sequence, 436 residues long: Voltage-gated potassium channel regulatory subunit KCNG3 (436 aa).

The Cytoplasmic segment spans residues 1–168; the sequence is MTFGRSGAAS…RTFEEPTSSL (168 aa). A helical transmembrane segment spans residues 169-190; the sequence is AAQILASVSVVFVIVSMVVLCA. Residues 191–220 are Extracellular-facing; that stretch reads STLPDWRNAAADNRSLDDRSRYSAGPGREP. Residues 221-242 form a helical membrane-spanning segment; it reads SGIIEAICIGWFTAECIVRFIV. Residues 243-253 are Cytoplasmic-facing; that stretch reads SKNKCEFVKRP. Residues 254 to 274 traverse the membrane as a helical segment; it reads LNIIDLLAITPYYISVLMTVF. Over 275-284 the chain is Extracellular; sequence TGENSQLQRA. The helical; Voltage-sensor transmembrane segment at 285 to 305 threads the bilayer; sequence GVTLRVLRMMRIFWVIKLARH. Residues 306–320 lie on the Cytoplasmic side of the membrane; the sequence is FIGLQTLGLTLKRCY. A helical transmembrane segment spans residues 321 to 342; sequence REMVMLLVFICVAMAIFSALSQ. At 343-360 the chain is on the extracellular side; it reads LLEHGLDLETSNKDFTSI. Residues 361 to 372 constitute an intramembrane region (helical); it reads PAACWWVIISMT. Residues 373 to 378 carry the Selectivity filter motif; sequence TVGYGD. An intramembrane segment occupies 373-380; sequence TVGYGDMY. The Extracellular segment spans residues 381 to 387; the sequence is PITVPGR. The helical transmembrane segment at 388 to 416 threads the bilayer; it reads ILGGVCVVSGIVLLALPITFIYHSFVQCY. At 417–436 the chain is on the cytoplasmic side; that stretch reads HELKFRSARYSRSLSTEFLN.

It belongs to the potassium channel family. G (TC 1.A.1.2) subfamily. Kv6.3/KCNG3 sub-subfamily. In terms of assembly, heterotetramer with KCNB1. Does not form homomultimers. In terms of tissue distribution, expressed in the brain, liver, testis, small intestine, colon, thymus and adrenal gland.

The protein localises to the cell membrane. It is found in the cytoplasm. Regulatory subunit of the voltage-gated potassium (Kv) channel which, when coassembled with KCNB1, modulates the kinetics parameters of the heterotetrameric channel namely the inactivation and deactivation rate. Potassium channel subunit that does not form functional channels by itself. Reduces the deactivation rate. Moderately accelerates activation. This chain is Voltage-gated potassium channel regulatory subunit KCNG3, found in Homo sapiens (Human).